Reading from the N-terminus, the 302-residue chain is tRNA-cytidine(32) 2-sulfurtransferase (302 aa).

A PP-loop motif motif is present at residues 45 to 50; it reads SGGKDS. 3 residues coordinate [4Fe-4S] cluster: Cys120, Cys123, and Cys211.

It belongs to the TtcA family. In terms of assembly, homodimer. Mg(2+) is required as a cofactor. It depends on [4Fe-4S] cluster as a cofactor.

It is found in the cytoplasm. The enzyme catalyses cytidine(32) in tRNA + S-sulfanyl-L-cysteinyl-[cysteine desulfurase] + AH2 + ATP = 2-thiocytidine(32) in tRNA + L-cysteinyl-[cysteine desulfurase] + A + AMP + diphosphate + H(+). Its pathway is tRNA modification. Catalyzes the ATP-dependent 2-thiolation of cytidine in position 32 of tRNA, to form 2-thiocytidine (s(2)C32). The sulfur atoms are provided by the cysteine/cysteine desulfurase (IscS) system. This Aeromonas hydrophila subsp. hydrophila (strain ATCC 7966 / DSM 30187 / BCRC 13018 / CCUG 14551 / JCM 1027 / KCTC 2358 / NCIMB 9240 / NCTC 8049) protein is tRNA-cytidine(32) 2-sulfurtransferase.